The chain runs to 562 residues: Protein FAM222B (562 aa).

2 stretches are compositionally biased toward low complexity: residues 155–167 (QQAL…LAHA) and 183–201 (ALSH…HPQP). Disordered regions lie at residues 155 to 203 (QQAL…QPMA), 219 to 245 (LQHP…VTVS), and 537 to 562 (AHRA…PGYR).

The protein belongs to the FAM222 family.

The chain is Protein FAM222B (FAM222B) from Homo sapiens (Human).